Consider the following 426-residue polypeptide: Dihydroorotase (426 aa).

Residues His58 and His60 each contribute to the Zn(2+) site. Residues 60–62 and Asn92 contribute to the substrate site; that span reads HLR. The Zn(2+) site is built by Asp150, His177, and His230. Substrate is bound at residue Asn276. Zn(2+) is bound at residue Asp303. Asp303 is an active-site residue. Residue His307 coordinates substrate.

This sequence belongs to the metallo-dependent hydrolases superfamily. DHOase family. Class I DHOase subfamily. Zn(2+) serves as cofactor.

The enzyme catalyses (S)-dihydroorotate + H2O = N-carbamoyl-L-aspartate + H(+). Its pathway is pyrimidine metabolism; UMP biosynthesis via de novo pathway; (S)-dihydroorotate from bicarbonate: step 3/3. In terms of biological role, catalyzes the reversible cyclization of carbamoyl aspartate to dihydroorotate. In Acetivibrio thermocellus (strain ATCC 27405 / DSM 1237 / JCM 9322 / NBRC 103400 / NCIMB 10682 / NRRL B-4536 / VPI 7372) (Clostridium thermocellum), this protein is Dihydroorotase.